Consider the following 417-residue polypeptide: Serine hydroxymethyltransferase (417 aa).

Residues L121 and 125–127 each bind (6S)-5,6,7,8-tetrahydrofolate; that span reads GHL. An N6-(pyridoxal phosphate)lysine modification is found at K229. 355–357 provides a ligand contact to (6S)-5,6,7,8-tetrahydrofolate; it reads SPF.

It belongs to the SHMT family. As to quaternary structure, homodimer. It depends on pyridoxal 5'-phosphate as a cofactor.

It is found in the cytoplasm. It carries out the reaction (6R)-5,10-methylene-5,6,7,8-tetrahydrofolate + glycine + H2O = (6S)-5,6,7,8-tetrahydrofolate + L-serine. It functions in the pathway one-carbon metabolism; tetrahydrofolate interconversion. Its pathway is amino-acid biosynthesis; glycine biosynthesis; glycine from L-serine: step 1/1. Functionally, catalyzes the reversible interconversion of serine and glycine with tetrahydrofolate (THF) serving as the one-carbon carrier. This reaction serves as the major source of one-carbon groups required for the biosynthesis of purines, thymidylate, methionine, and other important biomolecules. Also exhibits THF-independent aldolase activity toward beta-hydroxyamino acids, producing glycine and aldehydes, via a retro-aldol mechanism. The sequence is that of Serine hydroxymethyltransferase from Buchnera aphidicola subsp. Schizaphis graminum (strain Sg).